Consider the following 441-residue polypeptide: ATP-dependent RNA helicase RhlB (441 aa).

Positions Gln-9 to Ala-37 match the Q motif motif. A Helicase ATP-binding domain is found at Leu-40–Val-219. Residue Ala-53–Thr-60 coordinates ATP. Positions Asp-165–Asp-168 match the DEAD box motif. The Helicase C-terminal domain occupies Lys-243–Leu-390. A disordered region spans residues Arg-401 to Ser-441.

It belongs to the DEAD box helicase family. RhlB subfamily. Component of the RNA degradosome, which is a multiprotein complex involved in RNA processing and mRNA degradation.

Its subcellular location is the cytoplasm. The catalysed reaction is ATP + H2O = ADP + phosphate + H(+). Its function is as follows. DEAD-box RNA helicase involved in RNA degradation. Has RNA-dependent ATPase activity and unwinds double-stranded RNA. The protein is ATP-dependent RNA helicase RhlB of Shewanella woodyi (strain ATCC 51908 / MS32).